The primary structure comprises 130 residues: Protein ApaG (130 aa).

In terms of domain architecture, ApaG spans 3–127 (RAVTRGIEVS…FSLDIPEQRR (125 aa)).

The polypeptide is Protein ApaG (Brucella anthropi (strain ATCC 49188 / DSM 6882 / CCUG 24695 / JCM 21032 / LMG 3331 / NBRC 15819 / NCTC 12168 / Alc 37) (Ochrobactrum anthropi)).